A 323-amino-acid polypeptide reads, in one-letter code: Cytochrome c biogenesis protein CcsA (323 aa).

8 helical membrane-spanning segments follow: residues 17-37 (VVSI…IVGF), 44-64 (GMII…FFSG), 68-88 (FSDL…FYMV), 98-118 (LSTI…SGLL), 143-163 (MILG…ILVI), 229-249 (IISL…VWAN), 262-279 (ETWA…LHSR), and 291-311 (IVAS…NLLG).

The protein belongs to the CcmF/CycK/Ccl1/NrfE/CcsA family. As to quaternary structure, may interact with Ccs1.

The protein localises to the plastid. It is found in the chloroplast thylakoid membrane. Functionally, required during biogenesis of c-type cytochromes (cytochrome c6 and cytochrome f) at the step of heme attachment. In Lotus japonicus (Lotus corniculatus var. japonicus), this protein is Cytochrome c biogenesis protein CcsA.